Consider the following 302-residue polypeptide: DDRGK domain-containing protein 1 (302 aa).

Topologically, residues 1–5 (MDGGG) are lumenal. A helical transmembrane segment spans residues 6–26 (GMLGAVVCLLLVFAIFPLLLW). The Cytoplasmic segment spans residues 27–302 (RRRSDAAHRL…DENAAAGTEL (276 aa)). Disordered stretches follow at residues 36–151 (LPPQ…EEAR) and 279–302 (DLEPKPQYNEESNLDENAAAGTEL). The span at 79-91 (VDDADSDLEEEIQ) shows a compositional bias: acidic residues. The segment covering 103 to 151 (KRQDREAQRQAEEAARDSRRTKQDRYAEMRRKKDEEREAQERLMEEEAR) has biased composition (basic and acidic residues).

This sequence belongs to the DDRGK1 family.

The protein localises to the endoplasmic reticulum membrane. Its function is as follows. Substrate adapter for ufmylation, the covalent attachment of the ubiquitin-like modifier UFM1 to substrate proteins. In Oryza sativa subsp. japonica (Rice), this protein is DDRGK domain-containing protein 1.